We begin with the raw amino-acid sequence, 232 residues long: Ribonuclease P protein component 3 (232 aa).

This sequence belongs to the eukaryotic/archaeal RNase P protein component 3 family. In terms of assembly, consists of a catalytic RNA component and at least 5 protein subunits.

It localises to the cytoplasm. The catalysed reaction is Endonucleolytic cleavage of RNA, removing 5'-extranucleotides from tRNA precursor.. Functionally, part of ribonuclease P, a protein complex that generates mature tRNA molecules by cleaving their 5'-ends. The protein is Ribonuclease P protein component 3 of Methanococcus maripaludis (strain DSM 14266 / JCM 13030 / NBRC 101832 / S2 / LL).